The sequence spans 279 residues: Pantothenate synthetase (279 aa).

31–38 (MGNLHGGH) contributes to the ATP binding site. The active-site Proton donor is the His38. Gln62 is a (R)-pantoate binding site. A beta-alanine-binding site is contributed by Gln62. ATP is bound at residue 150–153 (GRKD). Position 156 (Gln156) interacts with (R)-pantoate. Residues Val179 and 187-190 (KSSR) contribute to the ATP site.

This sequence belongs to the pantothenate synthetase family. As to quaternary structure, homodimer.

Its subcellular location is the cytoplasm. It carries out the reaction (R)-pantoate + beta-alanine + ATP = (R)-pantothenate + AMP + diphosphate + H(+). Its pathway is cofactor biosynthesis; (R)-pantothenate biosynthesis; (R)-pantothenate from (R)-pantoate and beta-alanine: step 1/1. Catalyzes the condensation of pantoate with beta-alanine in an ATP-dependent reaction via a pantoyl-adenylate intermediate. This is Pantothenate synthetase from Stenotrophomonas maltophilia (strain R551-3).